The chain runs to 301 residues: Mitochondrial carnitine/acylcarnitine carrier protein (301 aa).

A2 carries the post-translational modification N-acetylalanine. Topologically, residues 2–12 are cytoplasmic; the sequence is ADEPKPISPFK. Solcar repeat units lie at residues 8 to 99, 108 to 196, and 207 to 293; these read ISPF…GKKL, LSYP…LKNL, and LSVP…AMKF. Residues 13–31 traverse the membrane as a helical segment; that stretch reads NLLAGGFGGMCLVFVGHPL. The Mitochondrial matrix segment spans residues 32–73; it reads DTVKVRLQTQPPSLSGQPPMYSGTLDCFRKTLMREGITGLYR. A helical transmembrane segment spans residues 74-93; that stretch reads GMAAPIIGVTPMFAVCFFGF. At 94-112 the chain is on the cytoplasmic side; sequence GLGKKLQQKSPEDELSYPQ. The helical transmembrane segment at 113–131 threads the bilayer; that stretch reads LFTAGMLSGVFTTGIMTPG. Residues 132-170 lie on the Mitochondrial matrix side of the membrane; it reads ERIKCLLQIQASSGENKYSGTLDCAKKLYQEFGIRGFYK. Residues K148 and K157 each carry the N6-acetyllysine modification. The residue at position 170 (K170) is an N6-acetyllysine; alternate. Position 170 is an N6-succinyllysine; alternate (K170). The helical transmembrane segment at 171-190 threads the bilayer; that stretch reads GTVLTLMRDVPASGMYFMTY. The Cytoplasmic segment spans residues 191–211; it reads EWLKNLFTPEGKSVSDLSVPR. Residues 212 to 230 form a helical membrane-spanning segment; it reads ILVAGGFAGIFNWAVAIPP. Residues 231 to 267 are Mitochondrial matrix-facing; the sequence is DVLKSRFQTAPPGKYPNGFRDVLRELIREEGVTSLYK. Residues 268–287 form a helical membrane-spanning segment; sequence GFNAVMIRAFPANAACFLGF. Residues 288–301 are Cytoplasmic-facing; it reads EIAMKFLNWIAPNL.

Belongs to the mitochondrial carrier (TC 2.A.29) family. Widely expressed, with highest levels in the liver, intermediate levels in heart, testis and kidney and low levels in brain, including cortex, cerebellum, hippocampus and hypothalamus.

Its subcellular location is the mitochondrion inner membrane. It catalyses the reaction O-acetyl-(R)-carnitine(in) + (R)-carnitine(out) = O-acetyl-(R)-carnitine(out) + (R)-carnitine(in). The enzyme catalyses an O-acyl-(R)-carnitine(in) + (R)-carnitine(out) = an O-acyl-(R)-carnitine(out) + (R)-carnitine(in). The catalysed reaction is O-propanoyl-(R)-carnitine(in) + (R)-carnitine(out) = O-propanoyl-(R)-carnitine(out) + (R)-carnitine(in). It carries out the reaction O-hexadecanoyl-(R)-carnitine(in) + (R)-carnitine(out) = O-hexadecanoyl-(R)-carnitine(out) + (R)-carnitine(in). It catalyses the reaction O-octanoyl-(R)-carnitine(in) + (R)-carnitine(out) = O-octanoyl-(R)-carnitine(out) + (R)-carnitine(in). The enzyme catalyses (R)-carnitine(in) = (R)-carnitine(out). In terms of biological role, mediates the electroneutral exchange of acylcarnitines (O-acyl-(R)-carnitine or L-acylcarnitine) of different acyl chain lengths (ranging from O-acetyl-(R)-carnitine to long-chain O-acyl-(R)-carnitines) with free carnitine ((R)-carnitine or L-carnitine) across the mitochondrial inner membrane, via a ping-pong mechanism. Key player in the mitochondrial oxidation pathway, it translocates the fatty acids in the form of acylcarnitines into the mitochondrial matrix, where the carnitine palmitoyltransferase 2 (CPT-2) activates them to undergo fatty acid beta-oxidation. Catalyzes the unidirectional transport (uniport) of carnitine at lower rates than the antiport (exchange). The chain is Mitochondrial carnitine/acylcarnitine carrier protein from Mus musculus (Mouse).